A 125-amino-acid chain; its full sequence is Probable 4-amino-4-deoxy-L-arabinose-phosphoundecaprenol flippase subunit ArnF (125 aa).

The Cytoplasmic segment spans residues 1–2 (MG). Residues 3-23 (VMWGLISVAIASLAQLSLGFA) form a helical membrane-spanning segment. Residues 24–33 (MMRLPSIAHP) lie on the Periplasmic side of the membrane. Residues 34–54 (LAFISGLGAFNAATLALFAGL) traverse the membrane as a helical segment. The Cytoplasmic portion of the chain corresponds to 55–76 (AGYLVSVFCWQKTLHTLALSKA). The chain crosses the membrane as a helical span at residues 77 to 97 (YALLSLSYVLVWVASMLLPGL). At 98–100 (QGA) the chain is on the periplasmic side. A helical membrane pass occupies residues 101–121 (FSLKAMLGVLCIMAGVMLIFL). The Cytoplasmic portion of the chain corresponds to 122-125 (PARS).

The protein belongs to the ArnF family. In terms of assembly, heterodimer of ArnE and ArnF.

The protein resides in the cell inner membrane. It functions in the pathway bacterial outer membrane biogenesis; lipopolysaccharide biosynthesis. Its function is as follows. Translocates 4-amino-4-deoxy-L-arabinose-phosphoundecaprenol (alpha-L-Ara4N-phosphoundecaprenol) from the cytoplasmic to the periplasmic side of the inner membrane. This Salmonella choleraesuis (strain SC-B67) protein is Probable 4-amino-4-deoxy-L-arabinose-phosphoundecaprenol flippase subunit ArnF.